A 121-amino-acid chain; its full sequence is MARISGVEIPNNKRVVVSLTYIYGIGLPTAQSVLKTLNISEDIRVKDLTEEQIKNISMEISKYKTEGKLRREVSLNIKRLMEIGSYRGLRHRKGLPVRGQSSKTNARTVKGPRKTVANKKK.

Positions 92-121 (RKGLPVRGQSSKTNARTVKGPRKTVANKKK) are disordered. Over residues 110 to 121 (KGPRKTVANKKK) the composition is skewed to basic residues.

This sequence belongs to the universal ribosomal protein uS13 family. In terms of assembly, part of the 30S ribosomal subunit. Forms a loose heterodimer with protein S19. Forms two bridges to the 50S subunit in the 70S ribosome.

Located at the top of the head of the 30S subunit, it contacts several helices of the 16S rRNA. In the 70S ribosome it contacts the 23S rRNA (bridge B1a) and protein L5 of the 50S subunit (bridge B1b), connecting the 2 subunits; these bridges are implicated in subunit movement. Contacts the tRNAs in the A and P-sites. This chain is Small ribosomal subunit protein uS13, found in Mycoplasma mycoides subsp. mycoides SC (strain CCUG 32753 / NCTC 10114 / PG1).